The chain runs to 155 residues: 6,7-dimethyl-8-ribityllumazine synthase (155 aa).

5-amino-6-(D-ribitylamino)uracil-binding positions include F24, 58-60 (AFE), and 82-84 (VII). A (2S)-2-hydroxy-3-oxobutyl phosphate-binding site is contributed by 87-88 (ST). The active-site Proton donor is the H90. F115 lines the 5-amino-6-(D-ribitylamino)uracil pocket. Position 129 (R129) interacts with (2S)-2-hydroxy-3-oxobutyl phosphate.

It belongs to the DMRL synthase family.

It catalyses the reaction (2S)-2-hydroxy-3-oxobutyl phosphate + 5-amino-6-(D-ribitylamino)uracil = 6,7-dimethyl-8-(1-D-ribityl)lumazine + phosphate + 2 H2O + H(+). It participates in cofactor biosynthesis; riboflavin biosynthesis; riboflavin from 2-hydroxy-3-oxobutyl phosphate and 5-amino-6-(D-ribitylamino)uracil: step 1/2. In terms of biological role, catalyzes the formation of 6,7-dimethyl-8-ribityllumazine by condensation of 5-amino-6-(D-ribitylamino)uracil with 3,4-dihydroxy-2-butanone 4-phosphate. This is the penultimate step in the biosynthesis of riboflavin. The chain is 6,7-dimethyl-8-ribityllumazine synthase from Chlorobium limicola (strain DSM 245 / NBRC 103803 / 6330).